An 804-amino-acid polypeptide reads, in one-letter code: Phosphatidylinositol 4-kinase beta (804 aa).

The PIK helical domain maps to Leu-55–Ser-245. 2 disordered regions span residues Leu-69–Arg-122 and Ala-251–Arg-309. Composition is skewed to polar residues over residues Lys-91–Arg-103 and Asp-281–Lys-300. Positions Glu-523 to Thr-789 constitute a PI3K/PI4K catalytic domain. The tract at residues Val-529–Gly-535 is G-loop. A catalytic loop region spans residues Gln-656–Asn-664. The tract at residues His-675–Thr-699 is activation loop.

This sequence belongs to the PI3/PI4-kinase family. Type III PI4K subfamily. Requires Mg(2+) as cofactor. Mn(2+) serves as cofactor.

Its subcellular location is the endomembrane system. The protein resides in the mitochondrion outer membrane. It is found in the rough endoplasmic reticulum membrane. It catalyses the reaction a 1,2-diacyl-sn-glycero-3-phospho-(1D-myo-inositol) + ATP = a 1,2-diacyl-sn-glycero-3-phospho-(1D-myo-inositol 4-phosphate) + ADP + H(+). Its function is as follows. Phosphorylates phosphatidylinositol (PI) in the first committed step in the production of the second messenger inositol-1,4,5,-trisphosphate (PIP). May play an important role in the inner ear development. This chain is Phosphatidylinositol 4-kinase beta (pi4kb), found in Xenopus laevis (African clawed frog).